The chain runs to 150 residues: UPF0506 protein SJCHGC03047 (150 aa).

Residues 1-18 (MNTCIQLLILCLVTLTNS) form the signal peptide. Residues Asn20, Asn48, and Asn110 are each glycosylated (N-linked (GlcNAc...) asparagine). 3 disulfides stabilise this stretch: Cys116-Cys130, Cys123-Cys134, and Cys129-Cys139.

The protein belongs to the UPF0506 family.

The protein resides in the secreted. The polypeptide is UPF0506 protein SJCHGC03047 (Schistosoma japonicum (Blood fluke)).